We begin with the raw amino-acid sequence, 337 residues long: D-alanine--D-alanine ligase (337 aa).

An ATP-grasp domain is found at 124–330 (KMWFSALGIP…FTEYLSLVIN (207 aa)). 154–209 (ALAQWGSIFVKAASQGSSVGCYKVDDSDKVAGVLKDAFGYAPYVIVEKTIKARELE) lines the ATP pocket. Mg(2+) is bound by residues Asp-284, Glu-297, and Asn-299.

The protein belongs to the D-alanine--D-alanine ligase family. Mg(2+) is required as a cofactor. Mn(2+) serves as cofactor.

The protein resides in the cytoplasm. It catalyses the reaction 2 D-alanine + ATP = D-alanyl-D-alanine + ADP + phosphate + H(+). It participates in cell wall biogenesis; peptidoglycan biosynthesis. Cell wall formation. The sequence is that of D-alanine--D-alanine ligase from Shewanella baltica (strain OS195).